Consider the following 659-residue polypeptide: Sodium/nucleoside cotransporter 2 (659 aa).

Over residues 1 to 10 (MAKSEGRKSA) the composition is skewed to basic and acidic residues. The disordered stretch occupies residues 1-22 (MAKSEGRKSASQDTSENGMENP). Serine 46 is modified (phosphoserine). 14 consecutive transmembrane segments (helical) span residues 81 to 101 (ILLG…CILN), 105 to 124 (ALAL…CHFL), 149 to 167 (KRVF…LALD), 173 to 193 (EQLI…ACSK), 201 to 221 (RTVF…IRTE), 234 to 254 (IQIF…DTLV), 261 to 281 (QSLP…YLGL), 296 to 315 (TMGT…FVGM), 337 to 356 (VMTG…FISF), 363 to 382 (LISA…KLVY), 424 to 444 (VAAN…TLSW), 455 to 475 (TFQV…GVQW), 530 to 550 (ATFS…LGGL), and 568 to 588 (ALFT…ILYV).

Belongs to the concentrative nucleoside transporter (CNT) (TC 2.A.41) family. In terms of tissue distribution, expressed in liver (in bile canalicular membrane vesicles (CMV) but not in sinusoidal vesicles), jejunum, spleen and heart. Also expressed in brain and skeletal muscle. Not expressed in kidney, muscle and lung.

It is found in the membrane. The protein localises to the apicolateral cell membrane. It catalyses the reaction adenosine(out) + Na(+)(out) = adenosine(in) + Na(+)(in). The catalysed reaction is inosine(out) + Na(+)(out) = inosine(in) + Na(+)(in). It carries out the reaction guanosine(out) + Na(+)(out) = guanosine(in) + Na(+)(in). The enzyme catalyses uridine(out) + Na(+)(out) = uridine(in) + Na(+)(in). Inhibited by formycin B, partially inhibited by purine analog ara-A. Its function is as follows. Sodium-dependent and purine-selective. Exhibits the transport characteristics of the nucleoside transport system cif or N1 subtype (N1/cif) (selective for purine nucleosides and uridine). Accepts purine, analogs of purine nucleosides and uridine, and exhibits high affinity for adenosine. May contribute to regulate the transport of organic compounds in testes across the blood-testis-barrier. This Rattus norvegicus (Rat) protein is Sodium/nucleoside cotransporter 2 (Slc28a2).